A 373-amino-acid polypeptide reads, in one-letter code: Queuine tRNA-ribosyltransferase (373 aa).

The active-site Proton acceptor is D89. Residues 89 to 93 (DSGGF), D143, Q192, and G220 each bind substrate. Positions 251 to 257 (GVGTPED) are RNA binding. Catalysis depends on D270, which acts as the Nucleophile. The tract at residues 275-279 (TRNAR) is RNA binding; important for wobble base 34 recognition. C308, C310, C313, and H339 together coordinate Zn(2+).

It belongs to the queuine tRNA-ribosyltransferase family. Homodimer. Within each dimer, one monomer is responsible for RNA recognition and catalysis, while the other monomer binds to the replacement base PreQ1. The cofactor is Zn(2+).

The catalysed reaction is 7-aminomethyl-7-carbaguanine + guanosine(34) in tRNA = 7-aminomethyl-7-carbaguanosine(34) in tRNA + guanine. The protein operates within tRNA modification; tRNA-queuosine biosynthesis. Functionally, catalyzes the base-exchange of a guanine (G) residue with the queuine precursor 7-aminomethyl-7-deazaguanine (PreQ1) at position 34 (anticodon wobble position) in tRNAs with GU(N) anticodons (tRNA-Asp, -Asn, -His and -Tyr). Catalysis occurs through a double-displacement mechanism. The nucleophile active site attacks the C1' of nucleotide 34 to detach the guanine base from the RNA, forming a covalent enzyme-RNA intermediate. The proton acceptor active site deprotonates the incoming PreQ1, allowing a nucleophilic attack on the C1' of the ribose to form the product. After dissociation, two additional enzymatic reactions on the tRNA convert PreQ1 to queuine (Q), resulting in the hypermodified nucleoside queuosine (7-(((4,5-cis-dihydroxy-2-cyclopenten-1-yl)amino)methyl)-7-deazaguanosine). In Aliarcobacter butzleri (strain RM4018) (Arcobacter butzleri), this protein is Queuine tRNA-ribosyltransferase.